Reading from the N-terminus, the 318-residue chain is MSVVVYAPASIGNVSVGFDVLGAAVSPIDGTLLGDRVKVEAGAEAFTLKTAGRFVDKLPANPQENIVYDCWQVFARELEKKSVVLKPLTMTLEKNMPIGSGLGSSACSIVAALDALNQFHASPLDETELLALMGEMEGKISGSIHYDNVAPCYLGGVQLMLEELGIISQSVPSFDDWYWVMAYPGIKVSTAEARAILPAQYRRQDIVAHGRYLAGFIHACHTQQPELAAKMIKDVIAEPYREKLLPGFAKARSYAAAAGALATGISGSGPTLFSVCKEQAVAERVARWLEQNYVQNEEGFVHICRLDKQGSKVTGSEL.

An ATP-binding site is contributed by 97 to 107 (PIGSGLGSSAC).

Belongs to the GHMP kinase family. Homoserine kinase subfamily.

It localises to the cytoplasm. The catalysed reaction is L-homoserine + ATP = O-phospho-L-homoserine + ADP + H(+). Its pathway is amino-acid biosynthesis; L-threonine biosynthesis; L-threonine from L-aspartate: step 4/5. Functionally, catalyzes the ATP-dependent phosphorylation of L-homoserine to L-homoserine phosphate. The protein is Homoserine kinase of Vibrio cholerae serotype O1 (strain ATCC 39541 / Classical Ogawa 395 / O395).